We begin with the raw amino-acid sequence, 84 residues long: Beta-cardiotoxin CTX15 (84 aa).

The N-terminal stretch at Met-1–Thr-21 is a signal peptide. Cystine bridges form between Cys-24–Cys-43, Cys-36–Cys-61, Cys-65–Cys-76, and Cys-77–Cys-82.

The protein belongs to the three-finger toxin family. Short-chain subfamily. Aminergic toxin sub-subfamily. As to expression, expressed by the venom gland.

The protein resides in the secreted. In terms of biological role, acts as a beta-blocker by binding to beta-1 and beta-2 adrenergic receptors (ADRB1 and ADRB2). It dose-dependently decreases the heart rate (bradycardia), whereas conventional cardiotoxins increases it. At 100 mg/kg, intraperitoneal injection into mice provokes labored breathing, impaired locomotion, lack of response to external stimuli, and death (after 30 minutes). The sequence is that of Beta-cardiotoxin CTX15 from Ophiophagus hannah (King cobra).